The chain runs to 280 residues: Serine protease 33 (280 aa).

The signal sequence occupies residues 1 to 22 (MRGVSCLQVLLLLVLGAAGTQG). The Peptidase S1 domain occupies 37–279 (IVGGRDGRDG…YSPWIQARVS (243 aa)). A disulfide bond links Cys62 and Cys78. Catalysis depends on charge relay system residues His77 and Asp126. 3 cysteine pairs are disulfide-bonded: Cys160-Cys237, Cys193-Cys216, and Cys227-Cys255. Ser231 (charge relay system) is an active-site residue.

Belongs to the peptidase S1 family. Predominantly expressed in macrophages. Present in the spleen, small and large intestine, lung and brain (at protein level). Highly expressed in peripheral leukocytes, ovary, retina, spleen and stomach. Moderately expressed in thymus, uterus and platelets, as well as some brain tissues, such as thalamus and fetal brain.

Its subcellular location is the secreted. Its function is as follows. Serine protease that has amidolytic activity, cleaving its substrates before Arg residues. This chain is Serine protease 33 (PRSS33), found in Homo sapiens (Human).